Reading from the N-terminus, the 79-residue chain is M-myrmicitoxin(01)-Tb1a (79 aa).

An N-terminal signal peptide occupies residues 1-26 (MKLSFLSLVLAIILVMALMYTPHAEA). Positions 27-56 (KAWADADADATAAADADADAVADALADAVA) are excised as a propeptide. Position 76 is a valine amide (Val-76).

This sequence belongs to the formicidae venom precursor-01 superfamily. In terms of processing, the C-terminal amidation is important for antimicrobial activity, since a non-amidated synthetic peptide shows a reduced antimicrobial activity (2-20-fold depending on the strain tested). The amidation may play a positive role in the peptide conformation, since amidated peptide shows an increase of about 5% of helical content. As to expression, expressed by the venom gland.

The protein localises to the secreted. It is found in the target cell membrane. Antimicrobial peptide that shows antimicrobial activities against all microorganisms tested with minimal inhibitory concentrations (MICs) values ranging from 0.45 to 97.5 umol/L. This peptide kills the microorganisms by permeabilizating the membranes. It shows a very weak hemolytic activity (HC(50)=325 umol/L) and weak cytotoxicity against human lymphocytes (LC(50)=67.8 umol/L). Gram-negative bacteria tested are E.coli (MIC=24.4 umol/L), C.sakazakii (MIC=5.8 umol/L), P.aeruginosa (MIC=8.7-12.2 umol/L), S.enterica (MIC=5.4 umol/L), and H.pylori (MIC=0.99-3.9 umol/L). Gram-positive bacteria tested are E.hirae (MIC=12.2 umol/L), S.aureus (MIC=3.0-6.4 umol/L), methicillin-resistant S.aureus (MRSA) (MIC=8.7 umol/L), S.xylosus (MIC=0.45-1.3 umol/L), and B.subtilis (MIC=24.4 umol/L). Fungi tested are A.niger (MIC=0.75 umol/L), C.albicans (MIC=17.3 umol/L), G.candidum (MIC=97.5 umol/L), and S.cerevisiae (MIC=6.1 umol/L). Finally the parasite tested is L.infantum (MIC=1.5 umol/L). The chain is M-myrmicitoxin(01)-Tb1a from Tetramorium bicarinatum (Tramp ant).